A 114-amino-acid polypeptide reads, in one-letter code: U-myrmeciitoxin(01)-Mg8a (114 aa).

The N-terminal stretch at 1–20 (MKLSTLLVAFVLLVITVILS) is a signal peptide. Residues 21–44 (TPSTNAKALAESNALAVAVSEAEP) constitute a propeptide that is removed on maturation.

Belongs to the formicidae venom precursor-01 superfamily. Expressed by the venom gland.

It is found in the secreted. May have antimicrobial properties, like most ant linear peptides. The chain is U-myrmeciitoxin(01)-Mg8a from Myrmecia gulosa (Red bulldog ant).